Consider the following 175-residue polypeptide: Ribosome maturation factor RimM (175 aa).

Positions 96-175 (EGDYYWHDLI…TITVDWDAGF (80 aa)) constitute a PRC barrel domain.

The protein belongs to the RimM family. In terms of assembly, binds ribosomal protein uS19.

The protein resides in the cytoplasm. Functionally, an accessory protein needed during the final step in the assembly of 30S ribosomal subunit, possibly for assembly of the head region. Essential for efficient processing of 16S rRNA. May be needed both before and after RbfA during the maturation of 16S rRNA. It has affinity for free ribosomal 30S subunits but not for 70S ribosomes. The chain is Ribosome maturation factor RimM from Actinobacillus pleuropneumoniae serotype 5b (strain L20).